Here is a 547-residue protein sequence, read N- to C-terminus: Chaperonin GroEL (547 aa).

ATP-binding positions include 30 to 33 (TLGP), Lys-51, 87 to 91 (DGTTT), Gly-415, and Asp-495.

Belongs to the chaperonin (HSP60) family. In terms of assembly, forms a cylinder of 14 subunits composed of two heptameric rings stacked back-to-back. Interacts with the co-chaperonin GroES.

The protein localises to the cytoplasm. The catalysed reaction is ATP + H2O + a folded polypeptide = ADP + phosphate + an unfolded polypeptide.. Together with its co-chaperonin GroES, plays an essential role in assisting protein folding. The GroEL-GroES system forms a nano-cage that allows encapsulation of the non-native substrate proteins and provides a physical environment optimized to promote and accelerate protein folding. The chain is Chaperonin GroEL from Shewanella pealeana (strain ATCC 700345 / ANG-SQ1).